We begin with the raw amino-acid sequence, 439 residues long: Paraneoplastic antigen-like protein 8A (439 aa).

The interval 208–439 (SALKAETPNN…RRATNESRKV (232 aa)) is disordered. Residues 231–249 (LVRRAGAKSRSRRKKQKKN) are compositionally biased toward basic residues. Composition is skewed to basic and acidic residues over residues 314 to 326 (GPRE…RAEA), 395 to 404 (SRREASDQKA), and 423 to 439 (AKPE…SRKV).

The protein belongs to the PNMA family.

The sequence is that of Paraneoplastic antigen-like protein 8A from Homo sapiens (Human).